The following is a 713-amino-acid chain: Polyribonucleotide nucleotidyltransferase (713 aa).

Mg(2+) is bound by residues Asp485 and Asp491. The KH domain occupies Pro552–Ile611. The 69-residue stretch at Asn621–Lys689 folds into the S1 motif domain.

This sequence belongs to the polyribonucleotide nucleotidyltransferase family. As to quaternary structure, component of the RNA degradosome, which is a multiprotein complex involved in RNA processing and mRNA degradation. Mg(2+) serves as cofactor.

The protein resides in the cytoplasm. The enzyme catalyses RNA(n+1) + phosphate = RNA(n) + a ribonucleoside 5'-diphosphate. Its function is as follows. Involved in mRNA degradation. Catalyzes the phosphorolysis of single-stranded polyribonucleotides processively in the 3'- to 5'-direction. This Aeromonas salmonicida (strain A449) protein is Polyribonucleotide nucleotidyltransferase.